A 90-amino-acid polypeptide reads, in one-letter code: uncharacterized protein (90 aa).

Residues 13-34 (APEGMGPHHAASSSHHSAQHHH) are disordered. Residues 52–72 (YKMWFLYALILALIFGVFMWW) form a helical membrane-spanning segment.

It localises to the host membrane. This is an uncharacterized protein from Invertebrate iridescent virus 3 (IIV-3).